Here is a 370-residue protein sequence, read N- to C-terminus: Selenide, water dikinase 2 (370 aa).

Residue Sec-24 is part of the active site. Sec-24 is a non-standard amino acid (selenocysteine). ATP is bound by residues Lys-27, 55 to 57 (GMD), Asp-76, and Asp-99. Asp-57 provides a ligand contact to Mg(2+). Mg(2+) is bound by residues Asp-99 and Asp-258.

This sequence belongs to the selenophosphate synthase 1 family. Class I subfamily. Homodimer. Requires Mg(2+) as cofactor. In terms of tissue distribution, first expressed in the midgut anlagen with subsequent expression in a variety of tissues including the gut and nervous system.

It catalyses the reaction hydrogenselenide + ATP + H2O = selenophosphate + AMP + phosphate + 2 H(+). In terms of biological role, synthesizes selenophosphate from selenide and ATP. The chain is Selenide, water dikinase 2 (Sps2) from Drosophila melanogaster (Fruit fly).